The sequence spans 68 residues: Palustrin-1c (68 aa).

Residues Met1–Cys22 form the signal peptide. Positions Glu23–Thr39 are excised as a propeptide. The cysteines at positions 62 and 68 are disulfide-linked.

In terms of tissue distribution, expressed by the skin glands.

The protein resides in the secreted. In terms of biological role, antimicrobial activity against Gram-negative bacterium E.coli. Stimulates insulin release. This chain is Palustrin-1c, found in Lithobates palustris (Pickerel frog).